We begin with the raw amino-acid sequence, 338 residues long: Malate dehydrogenase, mitochondrial (338 aa).

The transit peptide at 1-24 (MLSALARPASAALRRSFSTSAQNN) directs the protein to the mitochondrion. NAD(+) is bound by residues 31–37 (GASGGIG) and Asp-57. Residue Ser-33 is glycosylated (O-linked (GlcNAc) serine). An N6-acetyllysine; alternate mark is found at Lys-78 and Lys-91. Lys-78 and Lys-91 each carry N6-succinyllysine; alternate. The substrate site is built by Arg-104 and Arg-110. NAD(+) is bound by residues Asn-117 and 140–142 (IAN). Residue Asn-142 participates in substrate binding. An N6-acetyllysine modification is found at Lys-165. Position 176 (Arg-176) interacts with substrate. Residue Lys-185 is modified to N6-acetyllysine; alternate. Position 185 is an N6-succinyllysine; alternate (Lys-185). The active-site Proton acceptor is His-200. The residue at position 203 (Lys-203) is an N6-succinyllysine. N6-acetyllysine; alternate occurs at positions 215 and 239. N6-succinyllysine; alternate is present on residues Lys-215 and Lys-239. Position 239 is an N6-malonyllysine; alternate (Lys-239). Ser-246 is modified (phosphoserine). Met-251 lines the NAD(+) pocket. At Lys-269 the chain carries N6-succinyllysine. N6-acetyllysine; alternate occurs at positions 296, 301, 314, and 324. N6-succinyllysine; alternate occurs at positions 296, 301, 314, and 324. Phosphoserine is present on Ser-326. 3 positions are modified to N6-acetyllysine; alternate: Lys-328, Lys-329, and Lys-335. Lys-328 is subject to N6-succinyllysine; alternate. Residue Lys-329 is modified to N6-malonyllysine; alternate. An N6-succinyllysine; alternate modification is found at Lys-335.

This sequence belongs to the LDH/MDH superfamily. MDH type 1 family. In terms of assembly, homodimer. Post-translationally, acetylation is enhanced after treatment either with trichostin A (TCA) or with nicotinamide (NAM) with the appearance of tri- and tetraacetylations. Glucose also increases acetylation.

The protein resides in the mitochondrion matrix. The enzyme catalyses (S)-malate + NAD(+) = oxaloacetate + NADH + H(+). Enzyme activity is enhanced by acetylation. This chain is Malate dehydrogenase, mitochondrial (MDH2), found in Macaca fascicularis (Crab-eating macaque).